Consider the following 204-residue polypeptide: LexA repressor (204 aa).

The H-T-H motif DNA-binding region spans 28-48 (VREIGQAVGLASSSTVHGHLS). Active-site for autocatalytic cleavage activity residues include Ser126 and Lys164.

Belongs to the peptidase S24 family. In terms of assembly, homodimer.

It catalyses the reaction Hydrolysis of Ala-|-Gly bond in repressor LexA.. Its function is as follows. Represses a number of genes involved in the response to DNA damage (SOS response), including recA and lexA. In the presence of single-stranded DNA, RecA interacts with LexA causing an autocatalytic cleavage which disrupts the DNA-binding part of LexA, leading to derepression of the SOS regulon and eventually DNA repair. This is LexA repressor from Bacillus mycoides (strain KBAB4) (Bacillus weihenstephanensis).